An 881-amino-acid chain; its full sequence is Probable alpha/beta-glucosidase agdC (881 aa).

An N-terminal signal peptide occupies residues 1–14 (MLRSLLLLAPLVGA). N-linked (GlcNAc...) asparagine glycans are attached at residues Asn-171, Asn-293, and Asn-373. Asp-422 (nucleophile) is an active-site residue. Residue Glu-425 is part of the active site. The tract at residues 440 to 485 (YSRDNDLPPAAPPVRPSNPRPLPGFPGDFQPSSSSKRSTKGSKVGL) is disordered. Residues 448 to 463 (PAAPPVRPSNPRPLPG) show a composition bias toward pro residues. Asn-506 is a glycosylation site (N-linked (GlcNAc...) asparagine). Catalysis depends on Asp-571, which acts as the Proton donor. N-linked (GlcNAc...) asparagine glycans are attached at residues Asn-572, Asn-608, and Asn-742.

This sequence belongs to the glycosyl hydrolase 31 family.

It is found in the secreted. It catalyses the reaction Hydrolysis of terminal, non-reducing (1-&gt;4)-linked alpha-D-glucose residues with release of alpha-D-glucose.. The enzyme catalyses Hydrolysis of terminal, non-reducing beta-D-glucosyl residues with release of beta-D-glucose.. In terms of biological role, glucosidase involved in the degradation of cellulosic biomass. Has both alpha- and beta-glucosidase activity. This Neosartorya fischeri (strain ATCC 1020 / DSM 3700 / CBS 544.65 / FGSC A1164 / JCM 1740 / NRRL 181 / WB 181) (Aspergillus fischerianus) protein is Probable alpha/beta-glucosidase agdC (agdC).